The sequence spans 414 residues: Gamma-glutamyl phosphate reductase (414 aa).

The protein belongs to the gamma-glutamyl phosphate reductase family.

Its subcellular location is the cytoplasm. It carries out the reaction L-glutamate 5-semialdehyde + phosphate + NADP(+) = L-glutamyl 5-phosphate + NADPH + H(+). It participates in amino-acid biosynthesis; L-proline biosynthesis; L-glutamate 5-semialdehyde from L-glutamate: step 2/2. Functionally, catalyzes the NADPH-dependent reduction of L-glutamate 5-phosphate into L-glutamate 5-semialdehyde and phosphate. The product spontaneously undergoes cyclization to form 1-pyrroline-5-carboxylate. In Clostridium beijerinckii (strain ATCC 51743 / NCIMB 8052) (Clostridium acetobutylicum), this protein is Gamma-glutamyl phosphate reductase.